A 148-amino-acid chain; its full sequence is Protein NrdI (148 aa).

It belongs to the NrdI family.

Functionally, probably involved in ribonucleotide reductase function. This Mycolicibacterium gilvum (strain PYR-GCK) (Mycobacterium gilvum (strain PYR-GCK)) protein is Protein NrdI.